A 198-amino-acid chain; its full sequence is Fe/S biogenesis protein NfuA (198 aa).

[4Fe-4S] cluster-binding residues include cysteine 155 and cysteine 158.

Belongs to the NfuA family. As to quaternary structure, homodimer. The cofactor is [4Fe-4S] cluster.

Functionally, involved in iron-sulfur cluster biogenesis. Binds a 4Fe-4S cluster, can transfer this cluster to apoproteins, and thereby intervenes in the maturation of Fe/S proteins. Could also act as a scaffold/chaperone for damaged Fe/S proteins. This is Fe/S biogenesis protein NfuA from Haemophilus influenzae (strain 86-028NP).